We begin with the raw amino-acid sequence, 198 residues long: Recombination protein RecR (198 aa).

A C4-type zinc finger spans residues 57-72 (CAMCNTFTEHEVCETC). The Toprim domain maps to 80-175 (ALLCVVETPG…KVSRLARGVP (96 aa)).

Belongs to the RecR family.

Its function is as follows. May play a role in DNA repair. It seems to be involved in an RecBC-independent recombinational process of DNA repair. It may act with RecF and RecO. The chain is Recombination protein RecR from Janthinobacterium sp. (strain Marseille) (Minibacterium massiliensis).